A 747-amino-acid polypeptide reads, in one-letter code: Transcription factor phm2 (747 aa).

The zn(2)-C6 fungal-type DNA-binding region spans 21–50; it reads CNACRKRKRVRCDRLHPCSNCASRGLGSTC. Disordered stretches follow at residues 112-150 and 414-436; these read GLQN…DHGS and TAEP…PESR.

Its subcellular location is the nucleus. Functionally, transcription factor that regulates the expression of the gene cluster that mediates the biosynthesis of the trans-fused decalin-containing tetramic acid phomasetin. This Pyrenochaetopsis sp protein is Transcription factor phm2.